Consider the following 554-residue polypeptide: Potassium/proton antiporter CemA (554 aa).

A helical transmembrane segment spans residues 50–70; the sequence is SLFVVLFIPFFINIFTKIYVF. The segment at 113–410 is insert; sequence KTENFFPEKP…VPYNFNKNTE (298 aa). 3 helical membrane-spanning segments follow: residues 429-449, 479-499, and 514-534; these read ISAI…LFLL, MLLF…EVIF, and IIFL…KYWI.

The protein belongs to the CemA family.

Its subcellular location is the plastid. The protein resides in the chloroplast inner membrane. The catalysed reaction is K(+)(in) + H(+)(out) = K(+)(out) + H(+)(in). Contributes to K(+)/H(+) antiport activity by supporting proton efflux to control proton extrusion and homeostasis in chloroplasts in a light-dependent manner to modulate photosynthesis. Prevents excessive induction of non-photochemical quenching (NPQ) under continuous-light conditions. Indirectly promotes efficient inorganic carbon uptake into chloroplasts. The chain is Potassium/proton antiporter CemA from Stigeoclonium helveticum (Green alga).